A 639-amino-acid polypeptide reads, in one-letter code: UvrABC system protein C (639 aa).

One can recognise a GIY-YIG domain in the interval 31–109; it reads EQAGVYRMYD…IKKYQPKYNI (79 aa). The UVR domain occupies 218 to 253; sequence SAVIEQLVARMELASNELHFELAAKYRDQIVTLRKV.

It belongs to the UvrC family. In terms of assembly, interacts with UvrB in an incision complex.

Its subcellular location is the cytoplasm. Its function is as follows. The UvrABC repair system catalyzes the recognition and processing of DNA lesions. UvrC both incises the 5' and 3' sides of the lesion. The N-terminal half is responsible for the 3' incision and the C-terminal half is responsible for the 5' incision. This chain is UvrABC system protein C, found in Colwellia psychrerythraea (strain 34H / ATCC BAA-681) (Vibrio psychroerythus).